The following is a 140-amino-acid chain: Translation initiation factor 2 subunit beta (140 aa).

It belongs to the eIF-2-beta/eIF-5 family. In terms of assembly, heterotrimer composed of an alpha, a beta and a gamma chain.

EIF-2 functions in the early steps of protein synthesis by forming a ternary complex with GTP and initiator tRNA. The sequence is that of Translation initiation factor 2 subunit beta from Pyrococcus furiosus (strain ATCC 43587 / DSM 3638 / JCM 8422 / Vc1).